A 490-amino-acid polypeptide reads, in one-letter code: ATP synthase subunit beta, chloroplastic (490 aa).

Gly170–Thr177 lines the ATP pocket.

The protein belongs to the ATPase alpha/beta chains family. F-type ATPases have 2 components, CF(1) - the catalytic core - and CF(0) - the membrane proton channel. CF(1) has five subunits: alpha(3), beta(3), gamma(1), delta(1), epsilon(1). CF(0) has four main subunits: a(1), b(1), b'(1) and c(9-12).

The protein resides in the plastid. It is found in the chloroplast thylakoid membrane. It catalyses the reaction ATP + H2O + 4 H(+)(in) = ADP + phosphate + 5 H(+)(out). In terms of biological role, produces ATP from ADP in the presence of a proton gradient across the membrane. The catalytic sites are hosted primarily by the beta subunits. This is ATP synthase subunit beta, chloroplastic from Calystegia sepium (Hedge bindweed).